The following is a 358-amino-acid chain: UDP-N-acetylglucosamine--N-acetylmuramyl-(pentapeptide) pyrophosphoryl-undecaprenol N-acetylglucosamine transferase (358 aa).

Residues 10-12, N124, S196, and Q293 each bind UDP-N-acetyl-alpha-D-glucosamine; that span reads TGG.

Belongs to the glycosyltransferase 28 family. MurG subfamily.

It localises to the cell membrane. It carries out the reaction di-trans,octa-cis-undecaprenyl diphospho-N-acetyl-alpha-D-muramoyl-L-alanyl-D-glutamyl-meso-2,6-diaminopimeloyl-D-alanyl-D-alanine + UDP-N-acetyl-alpha-D-glucosamine = di-trans,octa-cis-undecaprenyl diphospho-[N-acetyl-alpha-D-glucosaminyl-(1-&gt;4)]-N-acetyl-alpha-D-muramoyl-L-alanyl-D-glutamyl-meso-2,6-diaminopimeloyl-D-alanyl-D-alanine + UDP + H(+). It participates in cell wall biogenesis; peptidoglycan biosynthesis. Functionally, cell wall formation. Catalyzes the transfer of a GlcNAc subunit on undecaprenyl-pyrophosphoryl-MurNAc-pentapeptide (lipid intermediate I) to form undecaprenyl-pyrophosphoryl-MurNAc-(pentapeptide)GlcNAc (lipid intermediate II). The protein is UDP-N-acetylglucosamine--N-acetylmuramyl-(pentapeptide) pyrophosphoryl-undecaprenol N-acetylglucosamine transferase of Exiguobacterium sp. (strain ATCC BAA-1283 / AT1b).